The following is a 273-amino-acid chain: Putative pyruvate, phosphate dikinase regulatory protein (273 aa).

149–156 contributes to the ADP binding site; it reads GPSRTSKT.

Belongs to the pyruvate, phosphate/water dikinase regulatory protein family. PDRP subfamily.

The enzyme catalyses N(tele)-phospho-L-histidyl/L-threonyl-[pyruvate, phosphate dikinase] + ADP = N(tele)-phospho-L-histidyl/O-phospho-L-threonyl-[pyruvate, phosphate dikinase] + AMP + H(+). It catalyses the reaction N(tele)-phospho-L-histidyl/O-phospho-L-threonyl-[pyruvate, phosphate dikinase] + phosphate + H(+) = N(tele)-phospho-L-histidyl/L-threonyl-[pyruvate, phosphate dikinase] + diphosphate. Bifunctional serine/threonine kinase and phosphorylase involved in the regulation of the pyruvate, phosphate dikinase (PPDK) by catalyzing its phosphorylation/dephosphorylation. In Rickettsia rickettsii (strain Iowa), this protein is Putative pyruvate, phosphate dikinase regulatory protein.